Reading from the N-terminus, the 176-residue chain is NAD(P)H-quinone oxidoreductase subunit 6, chloroplastic (176 aa).

The next 5 helical transmembrane spans lie at 10-30 (FLLVFLGSGLILGSLGVVLLT), 32-52 (PIFSAFSLGLTLVCISLLYIL), 63-83 (LLIYVGAINVLIIFGVMFMNG), 92-112 (LWTVGDGMTLMVCTSIFISLI), and 152-172 (FFLPFELISIILLAALIGAIV).

The protein belongs to the complex I subunit 6 family. NDH is composed of at least 16 different subunits, 5 of which are encoded in the nucleus.

The protein localises to the plastid. It localises to the chloroplast thylakoid membrane. It catalyses the reaction a plastoquinone + NADH + (n+1) H(+)(in) = a plastoquinol + NAD(+) + n H(+)(out). The catalysed reaction is a plastoquinone + NADPH + (n+1) H(+)(in) = a plastoquinol + NADP(+) + n H(+)(out). Its function is as follows. NDH shuttles electrons from NAD(P)H:plastoquinone, via FMN and iron-sulfur (Fe-S) centers, to quinones in the photosynthetic chain and possibly in a chloroplast respiratory chain. The immediate electron acceptor for the enzyme in this species is believed to be plastoquinone. Couples the redox reaction to proton translocation, and thus conserves the redox energy in a proton gradient. The protein is NAD(P)H-quinone oxidoreductase subunit 6, chloroplastic (ndhG) of Lotus japonicus (Lotus corniculatus var. japonicus).